Consider the following 454-residue polypeptide: Chromosomal replication initiator protein DnaA (454 aa).

The interval 1 to 81 is domain I, interacts with DnaA modulators; that stretch reads MNNSLWQQCA…PNVVLKVGEA (81 aa). The interval 79–110 is disordered; it reads GEASPTQRDSGSPQRAAATRRKTPNFSSGNTD. The tract at residues 81–117 is domain II; that stretch reads ASPTQRDSGSPQRAAATRRKTPNFSSGNTDVEVPFES. Over residues 82-91 the composition is skewed to polar residues; that stretch reads SPTQRDSGSP. A domain III, AAA+ region region spans residues 118 to 334; sequence NIHPEYTFDN…GALNRVVANV (217 aa). Residues G162, G164, K165, and T166 each coordinate ATP. The segment at 335–454 is domain IV, binds dsDNA; that stretch reads QLTGRPITID…YRNLIRTLSS (120 aa).

Belongs to the DnaA family. In terms of assembly, oligomerizes as a right-handed, spiral filament on DNA at oriC.

Its subcellular location is the cytoplasm. Its function is as follows. Plays an essential role in the initiation and regulation of chromosomal replication. ATP-DnaA binds to the origin of replication (oriC) to initiate formation of the DNA replication initiation complex once per cell cycle. Binds the DnaA box (a 9 base pair repeat at the origin) and separates the double-stranded (ds)DNA. Forms a right-handed helical filament on oriC DNA; dsDNA binds to the exterior of the filament while single-stranded (ss)DNA is stabiized in the filament's interior. The ATP-DnaA-oriC complex binds and stabilizes one strand of the AT-rich DNA unwinding element (DUE), permitting loading of DNA polymerase. After initiation quickly degrades to an ADP-DnaA complex that is not apt for DNA replication. Binds acidic phospholipids. This chain is Chromosomal replication initiator protein DnaA, found in Idiomarina loihiensis (strain ATCC BAA-735 / DSM 15497 / L2-TR).